We begin with the raw amino-acid sequence, 149 residues long: Nucleoside diphosphate kinase 1 (149 aa).

Residues K9, F57, R85, T91, R102, and N112 each coordinate ATP. Catalysis depends on H115, which acts as the Pros-phosphohistidine intermediate.

The protein belongs to the NDK family. Homohexamer. Can also form dodecamers. Requires Mg(2+) as cofactor.

The protein localises to the nucleus. It catalyses the reaction a 2'-deoxyribonucleoside 5'-diphosphate + ATP = a 2'-deoxyribonucleoside 5'-triphosphate + ADP. The enzyme catalyses a ribonucleoside 5'-diphosphate + ATP = a ribonucleoside 5'-triphosphate + ADP. Major role in the synthesis of nucleoside triphosphates other than ATP. The ATP gamma phosphate is transferred to the NDP beta phosphate via a ping-pong mechanism, using a phosphorylated active-site intermediate. Involved in transcription regulation. Has G-quadruplex (G4) DNA-binding activity, which is independent of its nucleotide-binding and kinase activity. Binds folded G4 with low nanomolar affinity and corresponding unfolded G-rich DNA more weakly. Stabilizes folded G4s regardless of whether they are prefolded or not. This Zea mays (Maize) protein is Nucleoside diphosphate kinase 1.